The chain runs to 374 residues: Transaldolase (374 aa).

Lys-140 functions as the Schiff-base intermediate with substrate in the catalytic mechanism.

This sequence belongs to the transaldolase family. Type 2 subfamily.

It localises to the cytoplasm. It catalyses the reaction D-sedoheptulose 7-phosphate + D-glyceraldehyde 3-phosphate = D-erythrose 4-phosphate + beta-D-fructose 6-phosphate. It participates in carbohydrate degradation; pentose phosphate pathway; D-glyceraldehyde 3-phosphate and beta-D-fructose 6-phosphate from D-ribose 5-phosphate and D-xylulose 5-phosphate (non-oxidative stage): step 2/3. Its function is as follows. Transaldolase is important for the balance of metabolites in the pentose-phosphate pathway. The polypeptide is Transaldolase (Renibacterium salmoninarum (strain ATCC 33209 / DSM 20767 / JCM 11484 / NBRC 15589 / NCIMB 2235)).